The chain runs to 96 residues: Non-specific lipid-transfer protein 2 (96 aa).

Positions 1–27 are cleaved as a signal peptide; that stretch reads MMRRLAVLVLAVAMVAACGGGVVGVAG. Cystine bridges form between Cys30–Cys62, Cys38–Cys52, Cys53–Cys88, and Cys64–Cys95.

The protein belongs to the plant LTP family. B11E subfamily.

Its function is as follows. Transfer lipids across membranes. May play a role in plant defense or in the biosynthesis of cuticle layers. The sequence is that of Non-specific lipid-transfer protein 2 (LTP-2) from Oryza sativa subsp. indica (Rice).